Here is a 229-residue protein sequence, read N- to C-terminus: Histone H3-like centromeric protein CSE4 (229 aa).

A compositionally biased stretch (polar residues) spans 1 to 35; sequence MSSKQQWVSSAIQSDSSGRSLSNVNRLAGDQQSIN. The tract at residues 1–78 is disordered; the sequence is MSSKQQWVSS…DIETDYEDQA (78 aa). Residues 53–68 show a composition bias toward basic and acidic residues; that stretch reads PRREERRRYESSKSDL. Positions 115–132 match the Nuclear localization signal motif; sequence KRREKQRKQSLKRVEKKY. Residues 132 to 229 are H3-like; it reads YTPSELALYE…LARRIRGQFI (98 aa).

The protein belongs to the histone H3 family. As to quaternary structure, component of centromeric nucleosomes, where DNA is wrapped around a histone octamer core. The octamer contains two molecules each of H2A, H2B, CSE4/CENPA and H4 assembled in one CSE4-H4 heterotetramer and two H2A-H2B heterodimers. Interacts with the inner kinetochore. Interacts with the central kinetochore protein CTF19. Interacts with YTA7. Ubiquitinated. Is degraded through ubiquitin-mediated proteolysis when not protected by its association to the kinetochore.

Its subcellular location is the nucleus. It localises to the chromosome. It is found in the centromere. In terms of biological role, histone H3-like nucleosomal protein that is specifically found in centromeric nucleosomes. Replaces conventional H3 in the nucleosome core of centromeric chromatin that serves as an assembly site for the inner kinetochore. Required for recruitment and assembly of kinetochore proteins, mitotic progression and chromosome segregation. May serve as an epigenetic mark that propagates centromere identity through replication and cell division. Required for functional chromatin architecture at the yeast 2-micron circle partitioning locus and promotes equal plasmid segregation. The sequence is that of Histone H3-like centromeric protein CSE4 (CSE4) from Saccharomyces cerevisiae (strain ATCC 204508 / S288c) (Baker's yeast).